The sequence spans 351 residues: Fructose-1,6-bisphosphatase class 1 1 (351 aa).

Residues Glu-84, Asp-106, Leu-108, and Asp-109 each coordinate Mg(2+). Substrate is bound by residues 109–112 (DGSS) and Asn-205. Residue Glu-277 participates in Mg(2+) binding.

Belongs to the FBPase class 1 family. In terms of assembly, homotetramer. Mg(2+) serves as cofactor.

It localises to the cytoplasm. It carries out the reaction beta-D-fructose 1,6-bisphosphate + H2O = beta-D-fructose 6-phosphate + phosphate. It participates in carbohydrate biosynthesis; Calvin cycle. The chain is Fructose-1,6-bisphosphatase class 1 1 from Methylibium petroleiphilum (strain ATCC BAA-1232 / LMG 22953 / PM1).